We begin with the raw amino-acid sequence, 609 residues long: D-apionate lactonase (609 aa).

It catalyses the reaction D-apionolactone + H2O = D-apionate + H(+). It functions in the pathway carbohydrate metabolism. Functionally, involved in catabolism of D-apiose. Hydrolyzes D-apionolactone to D-apionate. The protein is D-apionate lactonase of Brucella anthropi (strain ATCC 49188 / DSM 6882 / CCUG 24695 / JCM 21032 / LMG 3331 / NBRC 15819 / NCTC 12168 / Alc 37) (Ochrobactrum anthropi).